We begin with the raw amino-acid sequence, 673 residues long: UvrABC system protein B (673 aa).

A Helicase ATP-binding domain is found at 26 to 183 (EGLEDGLAHQ…RRLAELQYTR (158 aa)). 39–46 (GVTGSGKT) provides a ligand contact to ATP. A Beta-hairpin motif is present at residues 92 to 115 (YYDYYQPEAYVPSSDTFIEKDASV). The region spanning 431-597 (QVDDLLSEIR…GLNKKVVDIL (167 aa)) is the Helicase C-terminal domain. The 36-residue stretch at 633 to 668 (QQKIHELEGQMMQHAQNLEFEEAAEIRDQLHQLREL) folds into the UVR domain.

The protein belongs to the UvrB family. As to quaternary structure, forms a heterotetramer with UvrA during the search for lesions. Interacts with UvrC in an incision complex.

It localises to the cytoplasm. The UvrABC repair system catalyzes the recognition and processing of DNA lesions. A damage recognition complex composed of 2 UvrA and 2 UvrB subunits scans DNA for abnormalities. Upon binding of the UvrA(2)B(2) complex to a putative damaged site, the DNA wraps around one UvrB monomer. DNA wrap is dependent on ATP binding by UvrB and probably causes local melting of the DNA helix, facilitating insertion of UvrB beta-hairpin between the DNA strands. Then UvrB probes one DNA strand for the presence of a lesion. If a lesion is found the UvrA subunits dissociate and the UvrB-DNA preincision complex is formed. This complex is subsequently bound by UvrC and the second UvrB is released. If no lesion is found, the DNA wraps around the other UvrB subunit that will check the other stand for damage. This is UvrABC system protein B from Citrobacter koseri (strain ATCC BAA-895 / CDC 4225-83 / SGSC4696).